Consider the following 323-residue polypeptide: Phosphomevalonate kinase (323 aa).

Belongs to the GHMP kinase family. Homodimer. The cofactor is Mg(2+).

It catalyses the reaction (R)-5-phosphomevalonate + ATP = (R)-5-diphosphomevalonate + ADP. The protein operates within isoprenoid biosynthesis; isopentenyl diphosphate biosynthesis via mevalonate pathway; isopentenyl diphosphate from (R)-mevalonate: step 2/3. Functionally, catalyzes the phosphorylation of (R)-mevalonate 5-phosphate (MVAP) to (R)-mevalonate 5-diphosphate (MVAPP). Functions in the mevalonate (MVA) pathway leading to isopentenyl diphosphate (IPP), a key precursor for the biosynthesis of isoprenoid compounds such as archaeal membrane lipids. The protein is Phosphomevalonate kinase of Saccharolobus solfataricus (strain ATCC 35092 / DSM 1617 / JCM 11322 / P2) (Sulfolobus solfataricus).